The sequence spans 61 residues: IKCHNTLLPFIYKTCPEGQNLCFKGTLKFPKKTTYNRGCAATCPKSSLLVKYVCCNTNKCN.

Cystine bridges form between Cys-3–Cys-22, Cys-15–Cys-39, Cys-43–Cys-54, and Cys-55–Cys-60.

It belongs to the three-finger toxin family. Short-chain subfamily. Orphan group XV sub-subfamily. In terms of tissue distribution, expressed by the venom gland.

It localises to the secreted. The protein localises to the target cell membrane. In terms of biological role, has low cytotoxic activity. The polypeptide is Cytotoxin homolog 2 (Naja melanoleuca (Forest cobra)).